A 488-amino-acid polypeptide reads, in one-letter code: V-type proton ATPase subunit B 1 (488 aa).

Belongs to the ATPase alpha/beta chains family. V-ATPase is a heteromultimeric enzyme composed of a peripheral catalytic V1 complex (main components: subunits A, B, C, D, E, and F) attached to an integral membrane V0 proton pore complex (main component: the proteolipid protein).

In terms of biological role, non-catalytic subunit of the peripheral V1 complex of vacuolar ATPase. V-ATPase is responsible for acidifying a variety of intracellular compartments in eukaryotic cells. The protein is V-type proton ATPase subunit B 1 of Gossypium hirsutum (Upland cotton).